We begin with the raw amino-acid sequence, 95 residues long: UPF0045 protein CPE1503 (95 aa).

It belongs to the UPF0045 family.

In Clostridium perfringens (strain 13 / Type A), this protein is UPF0045 protein CPE1503.